Reading from the N-terminus, the 359-residue chain is Phosphoserine aminotransferase (359 aa).

Residue Arg-41 coordinates L-glutamate. Pyridoxal 5'-phosphate-binding positions include 75–76 (AS), Trp-101, Thr-152, Asp-171, and Gln-194. Position 195 is an N6-(pyridoxal phosphate)lysine (Lys-195). 236–237 (NT) lines the pyridoxal 5'-phosphate pocket.

It belongs to the class-V pyridoxal-phosphate-dependent aminotransferase family. SerC subfamily. As to quaternary structure, homodimer. The cofactor is pyridoxal 5'-phosphate.

The protein localises to the cytoplasm. It carries out the reaction O-phospho-L-serine + 2-oxoglutarate = 3-phosphooxypyruvate + L-glutamate. It catalyses the reaction 4-(phosphooxy)-L-threonine + 2-oxoglutarate = (R)-3-hydroxy-2-oxo-4-phosphooxybutanoate + L-glutamate. Its pathway is amino-acid biosynthesis; L-serine biosynthesis; L-serine from 3-phospho-D-glycerate: step 2/3. It functions in the pathway cofactor biosynthesis; pyridoxine 5'-phosphate biosynthesis; pyridoxine 5'-phosphate from D-erythrose 4-phosphate: step 3/5. Its function is as follows. Catalyzes the reversible conversion of 3-phosphohydroxypyruvate to phosphoserine and of 3-hydroxy-2-oxo-4-phosphonooxybutanoate to phosphohydroxythreonine. This Acinetobacter baumannii (strain AB307-0294) protein is Phosphoserine aminotransferase.